Consider the following 252-residue polypeptide: MNTSLIEITVAEIKELADVEPKQASKRFELIATTMNDEQLVEVIEKMDIVTLTQINSHHDISCPSIMSELMTPEQIRDIVCQQPLYWEEKIKNNAEELIQHTFDFLTYLIRIQDSEEKQTAILECIAEDPAGLFYLSIPFIEMMLGEGHDDEDHINDYYDDEEDTDTIGYDSRVASEEAHSFSLDDPRSLMALIHELAPDVEKAIKNLLRNESSGWETIINKFVNELVIQAKEKNQVTDEYAEVDDMFSFLD.

Interacts with AtcC, but not with AtcA and AtcJ. Interacts with the RNA polymerase subunits RpoB and RpoC.

Involved in cold adaptation. Directly interacts with the RNA polymerase and decreases its activity. May direct the DnaK chaperone to the RNA polymerase to sustain life at low temperatures. Overproduction prevents bacterial growth due to RNA polymerase inhibition. The protein is Adaptation to cold protein B of Shewanella oneidensis (strain ATCC 700550 / JCM 31522 / CIP 106686 / LMG 19005 / NCIMB 14063 / MR-1).